A 388-amino-acid chain; its full sequence is Chorismate synthase (388 aa).

Residues R39 and R45 each contribute to the NADP(+) site. FMN is bound by residues 130 to 132 (RSS), 251 to 252 (NA), G296, 311 to 315 (KPIPT), and R337.

It belongs to the chorismate synthase family. As to quaternary structure, homotetramer. FMNH2 serves as cofactor.

It carries out the reaction 5-O-(1-carboxyvinyl)-3-phosphoshikimate = chorismate + phosphate. Its pathway is metabolic intermediate biosynthesis; chorismate biosynthesis; chorismate from D-erythrose 4-phosphate and phosphoenolpyruvate: step 7/7. In terms of biological role, catalyzes the anti-1,4-elimination of the C-3 phosphate and the C-6 proR hydrogen from 5-enolpyruvylshikimate-3-phosphate (EPSP) to yield chorismate, which is the branch point compound that serves as the starting substrate for the three terminal pathways of aromatic amino acid biosynthesis. This reaction introduces a second double bond into the aromatic ring system. The protein is Chorismate synthase of Streptococcus pneumoniae serotype 2 (strain D39 / NCTC 7466).